A 252-amino-acid polypeptide reads, in one-letter code: Chitooligosaccharide deacetylase (252 aa).

The Mg(2+) site is built by His61 and His125.

Belongs to the YdjC deacetylase family. ChbG subfamily. In terms of assembly, homodimer. Mg(2+) serves as cofactor.

The protein resides in the cytoplasm. It catalyses the reaction N,N'-diacetylchitobiose + H2O = N-acetyl-beta-D-glucosaminyl-(1-&gt;4)-D-glucosamine + acetate. The enzyme catalyses diacetylchitobiose-6'-phosphate + H2O = N'-monoacetylchitobiose-6'-phosphate + acetate. It participates in glycan degradation; chitin degradation. Involved in the degradation of chitin. ChbG is essential for growth on the acetylated chitooligosaccharides chitobiose and chitotriose but is dispensable for growth on cellobiose and chitosan dimer, the deacetylated form of chitobiose. Deacetylation of chitobiose-6-P and chitotriose-6-P is necessary for both the activation of the chb promoter by the regulatory protein ChbR and the hydrolysis of phosphorylated beta-glucosides by the phospho-beta-glucosidase ChbF. Catalyzes the removal of only one acetyl group from chitobiose-6-P to yield monoacetylchitobiose-6-P, the inducer of ChbR and the substrate of ChbF. This is Chitooligosaccharide deacetylase from Enterobacter sp. (strain 638).